The primary structure comprises 153 residues: Endoribonuclease YbeY (153 aa).

Zn(2+)-binding residues include His113, His117, and His123.

This sequence belongs to the endoribonuclease YbeY family. Zn(2+) serves as cofactor.

It is found in the cytoplasm. Functionally, single strand-specific metallo-endoribonuclease involved in late-stage 70S ribosome quality control and in maturation of the 3' terminus of the 16S rRNA. In Aliivibrio fischeri (strain ATCC 700601 / ES114) (Vibrio fischeri), this protein is Endoribonuclease YbeY.